The sequence spans 96 residues: Cytochrome c2 iso-2 (96 aa).

Residues Cys-10, Cys-13, His-14, and Met-75 each coordinate heme c.

Belongs to the cytochrome c family. In terms of processing, binds 1 heme c group covalently per subunit.

Its function is as follows. Cytochrome c2 is found mainly in purple, non-sulfur, photosynthetic bacteria where it functions as the electron donor to the oxidized bacteriochlorophyll in the photophosphorylation pathway. However, it may also have a role in the respiratory chain and is found in some non-photosynthetic bacteria. This is Cytochrome c2 iso-2 from Magnetospirillum fulvum (Rhodospirillum fulvum).